A 273-amino-acid polypeptide reads, in one-letter code: Methylthioribulose-1-phosphate dehydratase (273 aa).

The segment at 1 to 27 (MCPTCPPSAASASSENNNTDNNDHLVL) is disordered. Cys-114 is a binding site for substrate. Zn(2+)-binding residues include His-132 and His-134. Glu-168 functions as the Proton donor/acceptor in the catalytic mechanism. His-225 lines the Zn(2+) pocket.

It belongs to the aldolase class II family. MtnB subfamily. It depends on Zn(2+) as a cofactor.

Its subcellular location is the cytoplasm. The enzyme catalyses 5-(methylsulfanyl)-D-ribulose 1-phosphate = 5-methylsulfanyl-2,3-dioxopentyl phosphate + H2O. Its pathway is amino-acid biosynthesis; L-methionine biosynthesis via salvage pathway; L-methionine from S-methyl-5-thio-alpha-D-ribose 1-phosphate: step 2/6. Functionally, catalyzes the dehydration of methylthioribulose-1-phosphate (MTRu-1-P) into 2,3-diketo-5-methylthiopentyl-1-phosphate (DK-MTP-1-P). This chain is Methylthioribulose-1-phosphate dehydratase, found in Sordaria macrospora (strain ATCC MYA-333 / DSM 997 / K(L3346) / K-hell).